Reading from the N-terminus, the 354-residue chain is UDP-N-acetylglucosamine--N-acetylmuramyl-(pentapeptide) pyrophosphoryl-undecaprenol N-acetylglucosamine transferase (354 aa).

UDP-N-acetyl-alpha-D-glucosamine-binding positions include 15-17 (TGG), Asn-127, Arg-163, Ser-191, Ile-244, 263-268 (ALTVSE), and Gln-288.

This sequence belongs to the glycosyltransferase 28 family. MurG subfamily.

The protein localises to the cell inner membrane. The enzyme catalyses di-trans,octa-cis-undecaprenyl diphospho-N-acetyl-alpha-D-muramoyl-L-alanyl-D-glutamyl-meso-2,6-diaminopimeloyl-D-alanyl-D-alanine + UDP-N-acetyl-alpha-D-glucosamine = di-trans,octa-cis-undecaprenyl diphospho-[N-acetyl-alpha-D-glucosaminyl-(1-&gt;4)]-N-acetyl-alpha-D-muramoyl-L-alanyl-D-glutamyl-meso-2,6-diaminopimeloyl-D-alanyl-D-alanine + UDP + H(+). It participates in cell wall biogenesis; peptidoglycan biosynthesis. Cell wall formation. Catalyzes the transfer of a GlcNAc subunit on undecaprenyl-pyrophosphoryl-MurNAc-pentapeptide (lipid intermediate I) to form undecaprenyl-pyrophosphoryl-MurNAc-(pentapeptide)GlcNAc (lipid intermediate II). The protein is UDP-N-acetylglucosamine--N-acetylmuramyl-(pentapeptide) pyrophosphoryl-undecaprenol N-acetylglucosamine transferase of Serratia proteamaculans (strain 568).